The sequence spans 1091 residues: Ninein homolog (1091 aa).

Residues 1-361 (MEVSADPYEQ…AVEVDERHAS (361 aa)) are sufficient for binding to microtubules. Disordered stretches follow at residues 100–216 (YIES…TTSP), 456–483 (AQTS…KEEE), 525–602 (KAKK…EELT), and 616–639 (KAAK…SLEQ). 5 positions are modified to phosphoserine: Ser103, Ser107, Ser108, Ser113, and Ser141. Thr144 bears the Phosphothreonine mark. Positions 168–177 (VQRSSSQSDL) are enriched in polar residues. Residues 487 to 526 (LMEKLAALQMENAQLRDKTDELTIEIESLNVELIRSKTKA) are sufficient for interaction with ens. Basic and acidic residues-rich tracts occupy residues 527-537 (KKQEKQEKQED) and 547-563 (RRGD…ESPR). Ser594 carries the phosphoserine modification. Basic and acidic residues predominate over residues 616–634 (KAAKEGRSLTPESRSKELE). Residues Ser701 and Ser714 each carry the phosphoserine modification. Residues 799-919 (AKSLADSKDE…TSCLSHEKCS (121 aa)) are disordered. A compositionally biased stretch (polar residues) spans 822-845 (SHKTASRNNLTTSETSIFSTTPFE). The span at 846-860 (SSQSGPSPTNSGNSN) shows a compositional bias: low complexity. Positions 894-913 (ETSSTASGKSFESNSKTSCL) are enriched in polar residues.

Interacts with ens.

Its subcellular location is the cytoplasm. It is found in the cytoskeleton. The protein localises to the microtubule organizing center. The protein resides in the centrosome. It localises to the perinuclear region. Required for the positioning and anchorage of the microtubule minus-ends in various cells. In fat body cells, part of perinuclear non-centrosomal microtubule-organizing centers (ncMTOCs) which function to accommodate the organization of microtubule (MT) networks to control nuclear positioning and dynein motor-based retrograde endosomal trafficking. Within the ncMTOCs, Msp300 and shot anchors the ncMTOC at the nuclear surface and recruits the MT minus-end regulators Patronin and Nin for assembly, anchoring and/or stabilization of circumferential and radial MTs at the ncMTOC. This protein may also function with Patronin to recruit msps to the ncMTOC for the gamma-tubulin-independent elongation of radial MTs. In embryonic myotubes and larval myofibers, functions with ens to regulate myonuclear positioning and, as a consequence, is involved in muscle development. Likely functions by positively regulating ens. Essential for embryogenesis, likely by contributing to accurate chromosome segregation during early embryonic nuclear divisions. However, other reports found that it is not essential for embryogenesis or embryonic cellular divisions. This chain is Ninein homolog, found in Drosophila melanogaster (Fruit fly).